Here is a 206-residue protein sequence, read N- to C-terminus: Small ribosomal subunit protein uS2 (206 aa).

Belongs to the universal ribosomal protein uS2 family.

This is Small ribosomal subunit protein uS2 from Pyrobaculum neutrophilum (strain DSM 2338 / JCM 9278 / NBRC 100436 / V24Sta) (Thermoproteus neutrophilus).